Reading from the N-terminus, the 233-residue chain is tRNA (guanine-N(1)-)-methyltransferase (233 aa).

S-adenosyl-L-methionine contacts are provided by residues Gly-113 and 133-138 (VGDYVL).

It belongs to the RNA methyltransferase TrmD family. In terms of assembly, homodimer.

Its subcellular location is the cytoplasm. It carries out the reaction guanosine(37) in tRNA + S-adenosyl-L-methionine = N(1)-methylguanosine(37) in tRNA + S-adenosyl-L-homocysteine + H(+). Its function is as follows. Specifically methylates guanosine-37 in various tRNAs. The sequence is that of tRNA (guanine-N(1)-)-methyltransferase from Rhizobium etli (strain ATCC 51251 / DSM 11541 / JCM 21823 / NBRC 15573 / CFN 42).